A 340-amino-acid chain; its full sequence is Ketol-acid reductoisomerase (NADP(+)) (340 aa).

The KARI N-terminal Rossmann domain maps to 3–182 (VQMEYEKDVK…GAARVGLLET (180 aa)). Residues 26-29 (YGSQ), R49, S53, and 83-86 (DEIQ) each bind NADP(+). Residue H108 is part of the active site. G134 serves as a coordination point for NADP(+). In terms of domain architecture, KARI C-terminal knotted spans 183–328 (TYKEETEEDL…AELRKAMPFV (146 aa)). Mg(2+)-binding residues include D191, E195, E227, and E231. S252 contributes to the substrate binding site.

It belongs to the ketol-acid reductoisomerase family. Mg(2+) serves as cofactor.

It carries out the reaction (2R)-2,3-dihydroxy-3-methylbutanoate + NADP(+) = (2S)-2-acetolactate + NADPH + H(+). The enzyme catalyses (2R,3R)-2,3-dihydroxy-3-methylpentanoate + NADP(+) = (S)-2-ethyl-2-hydroxy-3-oxobutanoate + NADPH + H(+). Its pathway is amino-acid biosynthesis; L-isoleucine biosynthesis; L-isoleucine from 2-oxobutanoate: step 2/4. It functions in the pathway amino-acid biosynthesis; L-valine biosynthesis; L-valine from pyruvate: step 2/4. Functionally, involved in the biosynthesis of branched-chain amino acids (BCAA). Catalyzes an alkyl-migration followed by a ketol-acid reduction of (S)-2-acetolactate (S2AL) to yield (R)-2,3-dihydroxy-isovalerate. In the isomerase reaction, S2AL is rearranged via a Mg-dependent methyl migration to produce 3-hydroxy-3-methyl-2-ketobutyrate (HMKB). In the reductase reaction, this 2-ketoacid undergoes a metal-dependent reduction by NADPH to yield (R)-2,3-dihydroxy-isovalerate. The polypeptide is Ketol-acid reductoisomerase (NADP(+)) (Streptococcus thermophilus (strain CNRZ 1066)).